The following is a 414-amino-acid chain: Tyrosine--tRNA ligase (414 aa).

Tyr38 is a binding site for L-tyrosine. Residues 43–52 (PTAISLHLGN) carry the 'HIGH' region motif. L-tyrosine-binding residues include Tyr165 and Gln169. The 'KMSKS' region motif lies at 227–231 (KIGKS). An ATP-binding site is contributed by Lys230. The 65-residue stretch at 349–413 (DDLFLTLVDS…KGKKQYWVIY (65 aa)) folds into the S4 RNA-binding domain.

Belongs to the class-I aminoacyl-tRNA synthetase family. TyrS type 1 subfamily. Homodimer.

The protein localises to the cytoplasm. The enzyme catalyses tRNA(Tyr) + L-tyrosine + ATP = L-tyrosyl-tRNA(Tyr) + AMP + diphosphate + H(+). Functionally, catalyzes the attachment of tyrosine to tRNA(Tyr) in a two-step reaction: tyrosine is first activated by ATP to form Tyr-AMP and then transferred to the acceptor end of tRNA(Tyr). The polypeptide is Tyrosine--tRNA ligase (Mycoplasmopsis pulmonis (strain UAB CTIP) (Mycoplasma pulmonis)).